Consider the following 586-residue polypeptide: MVVGKIIKISGPVVVAEGMKGSQMFEVVKVGNEGLTGEIIQLTEDEAIIQVYEETAGIKPGEGVTGTGAPLSVELGPGMLKAMYDGIQRPLNEIENATDSIYIPRGVSVPSISRVIKWDFEPTAAVGDEVITGDVIGTVQETASIVHKIMIPFGVSGKIKEIKSGSFTVEETVAVVETADGEKEIQMMQKWPVRKPRPSKGKQAPVIPLITGQRVEDTFFGLAKGGASAIPGPFGSGKTVTQHQLAKWSDVDVVVYIGCGERGNEMTEVIEEFPHLDDIKTGNKLMDRTVLIANTSNMPVAAREASVYTGITIAEYFRDQGLGVLLTADSTSRWAEAMREISGRLEEMPGEEGYPAYLSSKLAQFYERAGRVECLGSENKQGFVCIVGAVSPPGGDFSEPVTSNTLRIVKVFWALDANLARRRHFPAINWLTSYSLYIDDIAGWWQQNTAADWRSLRDEAMSLLQKEAELQEIVQLVGPDALPDRERVILEIARMLREDFLQQDAYHEVDSYCSPIKQYHMLKIIMTFYKKGLDAVAKGADPAGISAVTVKGDIARMKYLVEEEFVNTKVPEIINKMESELGALIK.

232–239 (GPFGSGKT) contributes to the ATP binding site.

Belongs to the ATPase alpha/beta chains family. Has multiple subunits with at least A(3), B(3), C, D, E, F, H, I and proteolipid K(x).

It is found in the cell membrane. The catalysed reaction is ATP + H2O + 4 H(+)(in) = ADP + phosphate + 5 H(+)(out). Component of the A-type ATP synthase that produces ATP from ADP in the presence of a proton gradient across the membrane. The A chain is the catalytic subunit. The sequence is that of A-type ATP synthase subunit A from Methanococcus maripaludis (strain C7 / ATCC BAA-1331).